Consider the following 209-residue polypeptide: Small ribosomal subunit protein uS4 (209 aa).

Positions 99–159 constitute an S4 RNA-binding domain; the sequence is SRLDSVCYRM…EKSKAQLRIK (61 aa).

This sequence belongs to the universal ribosomal protein uS4 family. In terms of assembly, part of the 30S ribosomal subunit. Contacts protein S5. The interaction surface between S4 and S5 is involved in control of translational fidelity.

In terms of biological role, one of the primary rRNA binding proteins, it binds directly to 16S rRNA where it nucleates assembly of the body of the 30S subunit. Its function is as follows. With S5 and S12 plays an important role in translational accuracy. The chain is Small ribosomal subunit protein uS4 from Thiobacillus denitrificans (strain ATCC 25259 / T1).